A 979-amino-acid chain; its full sequence is Mast/stem cell growth factor receptor Kit (979 aa).

An N-terminal signal peptide occupies residues 1 to 24 (MRGARGAWDLLCVLLVLLRGQTAT). At 25-527 (SQPSASPGEP…QIQAHTLFTP (503 aa)) the chain is on the extracellular side. Ig-like C2-type domains lie at 31–117 (PGEP…DPAK), 126–210 (FGKE…AAIK), and 217–315 (VPET…EKGF). Cystine bridges form between Cys-58–Cys-98, Cys-137–Cys-187, Cys-152–Cys-184, and Cys-234–Cys-293. Asn-146 carries N-linked (GlcNAc...) asparagine glycosylation. N-linked (GlcNAc...) asparagine glycosylation is found at Asn-296, Asn-303, Asn-323, Asn-355, Asn-370, Asn-466, and Asn-489. Ig-like C2-type domains follow at residues 324–417 (TTVF…TKPE) and 420–514 (TYDR…FKGN). A disulfide bridge connects residues Cys-431 and Cys-494. Residues 528 to 548 (LLIGFVVAAGAMGIIVMVLTY) form a helical membrane-spanning segment. At 549 to 979 (KYLQKPMYEV…TQPLLVHEDA (431 aa)) the chain is on the cytoplasmic side. 2 positions are modified to phosphotyrosine; by autocatalysis: Tyr-550 and Tyr-556. Tyr-571 serves as a coordination point for Mg(2+). Phosphotyrosine occurs at positions 571 and 573. The segment at 571 to 573 (YVY) is important for interaction with phosphotyrosine-binding proteins. The region spanning 592–939 (LSFGKTLGAG…ISDSTKHIYS (348 aa)) is the Protein kinase domain. ATP contacts are provided by residues 599–606 (GAGAFGKV), Lys-626, and 674–680 (EYCCYGD). At Tyr-706 the chain carries Phosphotyrosine. Ser-720 bears the Phosphoserine mark. Phosphotyrosine; by autocatalysis occurs at positions 723 and 732. Residues Ser-743 and Ser-748 each carry the phosphoserine; by PKC/PRKCA modification. Asp-794 serves as the catalytic Proton acceptor. ATP is bound at residue Arg-798. The Mg(2+) site is built by Asn-799 and Asp-812. At Ser-823 the chain carries Phosphoserine. The residue at position 825 (Tyr-825) is a Phosphotyrosine; by autocatalysis. Ser-893 is modified (phosphoserine). Tyr-902 bears the Phosphotyrosine; by autocatalysis mark. Tyr-938 carries the post-translational modification Phosphotyrosine. Ser-962 carries the post-translational modification Phosphoserine.

This sequence belongs to the protein kinase superfamily. Tyr protein kinase family. CSF-1/PDGF receptor subfamily. In terms of assembly, monomer in the absence of bound KITLG/SCF. Homodimer in the presence of bound KITLG/SCF, forming a heterotetramer with two KITLG/SCF molecules. Interacts (via phosphorylated tyrosine residues) with the adapter proteins GRB2 and GRB7 (via SH2 domain), and SH2B2/APS. Interacts (via C-terminus) with MPDZ (via the tenth PDZ domain). Interacts (via phosphorylated tyrosine residues) with the protein phosphatases PTPN6/SHP-1 (via SH2 domain), PTPN11/SHP-2 (via SH2 domain) and PTPRU. Interacts with DOK1 and TEC. Interacts with the protein kinase FES/FPS. Interacts with PLCG1. Interacts (via phosphorylated tyrosine residues) with PIK3R1 and PIK3 catalytic subunit. Interacts (KITLG/SCF-bound) with IL1RL1. Interacts with IL1RAP (independent of stimulation with KITLG/SCF). A mast cell-specific KITLG/SCF-induced interleukin-33 signaling complex contains IL1RL1, IL1RAP, KIT and MYD88. In terms of processing, ubiquitinated by SOCS6. KIT is rapidly ubiquitinated after autophosphorylation induced by KITLG/SCF binding, leading to internalization and degradation. Autophosphorylated on tyrosine residues. KITLG/SCF binding promotes autophosphorylation of isoform 1 and isoform 2. Isoform 1 shows low levels of tyrosine phosphorylation in the absence of added KITLG/SCF, while isoform 2 requires stimulation by KITLG/SCF for phosphorylation (in vitro). Phosphorylation of Tyr-573 is required for interaction with PTPN6/SHP-1. Phosphorylation of Tyr-571 is required for interaction with PTPN11/SHP-2. Phosphorylated tyrosine residues are important for interaction with specific binding partners. In terms of tissue distribution, isoform 1 and isoform 2 are detected in bone marrow cells, spermatogonia and spermatocytes, but not in round spermatids, elongating spermatids and spermatozoa. Isoform 3 is detected in round spermatids, elongating spermatids and spermatozoa, but not in spermatogonia and spermatocytes (at protein level). Isoform 1 is widely expressed and detected in fetal liver and bone marrow. Isoform 3 is detected in bone marrow cells enriched in hematopoietic stem cells.

It is found in the cell membrane. Its subcellular location is the cytoplasm. It catalyses the reaction L-tyrosyl-[protein] + ATP = O-phospho-L-tyrosyl-[protein] + ADP + H(+). Present in an inactive conformation in the absence of bound ligand. KITLG/SCF binding leads to dimerization and activation by autophosphorylation. Tyrosine-protein kinase that acts as a cell-surface receptor for the cytokine KITLG/SCF and plays an essential role in the regulation of cell survival and proliferation, hematopoiesis, stem cell maintenance, gametogenesis, mast cell development, migration and function, and in melanogenesis. In response to KITLG/SCF binding, KIT can activate several signaling pathways. Phosphorylates PIK3R1, PLCG1, SH2B2/APS and CBL. Activates the AKT1 signaling pathway by phosphorylation of PIK3R1, the regulatory subunit of phosphatidylinositol 3-kinase. Activated KIT also transmits signals via GRB2 and activation of RAS, RAF1 and the MAP kinases MAPK1/ERK2 and/or MAPK3/ERK1. Promotes activation of STAT family members STAT1, STAT3, STAT5A and STAT5B. Activation of PLCG1 leads to the production of the cellular signaling molecules diacylglycerol and inositol 1,4,5-trisphosphate. KIT signaling is modulated by protein phosphatases, and by rapid internalization and degradation of the receptor. Activated KIT promotes phosphorylation of the protein phosphatases PTPN6/SHP-1 and PTPRU, and of the transcription factors STAT1, STAT3, STAT5A and STAT5B. Promotes phosphorylation of PIK3R1, CBL, CRK (isoform Crk-II), LYN, MAPK1/ERK2 and/or MAPK3/ERK1, PLCG1, SRC and SHC1. This Mus musculus (Mouse) protein is Mast/stem cell growth factor receptor Kit (Kit).